The primary structure comprises 411 residues: uncharacterized protein (411 aa).

Residues 32–108 are disordered; it reads LGGDPAPKPT…PEHPRRIPIP (77 aa).

This is an uncharacterized protein from Ictalurid herpesvirus 1 (strain Auburn) (IcHV-1).